Consider the following 303-residue polypeptide: Probable 5-dehydro-4-deoxyglucarate dehydratase (303 aa).

The protein belongs to the DapA family.

It carries out the reaction 5-dehydro-4-deoxy-D-glucarate + H(+) = 2,5-dioxopentanoate + CO2 + H2O. The protein operates within carbohydrate acid metabolism; D-glucarate degradation; 2,5-dioxopentanoate from D-glucarate: step 2/2. This chain is Probable 5-dehydro-4-deoxyglucarate dehydratase, found in Pseudomonas putida (strain GB-1).